Reading from the N-terminus, the 307-residue chain is Glycerol-3-phosphate dehydrogenase [NAD(P)+] (307 aa).

NADPH is bound by residues tryptophan 14, arginine 34, arginine 35, and lysine 82. Sn-glycerol 3-phosphate contacts are provided by lysine 82 and glycine 110. Residue serine 114 coordinates NADPH. The sn-glycerol 3-phosphate site is built by lysine 165, aspartate 218, serine 228, arginine 229, and asparagine 230. Lysine 165 serves as the catalytic Proton acceptor. An NADPH-binding site is contributed by arginine 229. Glutamate 255 serves as a coordination point for NADPH.

It belongs to the NAD-dependent glycerol-3-phosphate dehydrogenase family.

The protein resides in the cytoplasm. It carries out the reaction sn-glycerol 3-phosphate + NAD(+) = dihydroxyacetone phosphate + NADH + H(+). It catalyses the reaction sn-glycerol 3-phosphate + NADP(+) = dihydroxyacetone phosphate + NADPH + H(+). It functions in the pathway membrane lipid metabolism; glycerophospholipid metabolism. In terms of biological role, catalyzes the reduction of the glycolytic intermediate dihydroxyacetone phosphate (DHAP) to sn-glycerol 3-phosphate (G3P), the key precursor for phospholipid synthesis. In Nostoc sp. (strain PCC 7120 / SAG 25.82 / UTEX 2576), this protein is Glycerol-3-phosphate dehydrogenase [NAD(P)+].